Reading from the N-terminus, the 252-residue chain is Triosephosphate isomerase (252 aa).

Substrate is bound at residue 10–12 (NWK). Residue His-96 is the Electrophile of the active site. Residue Glu-168 is the Proton acceptor of the active site. Residues Gly-174, Ser-214, and 235–236 (GG) contribute to the substrate site.

Belongs to the triosephosphate isomerase family. As to quaternary structure, homodimer.

It is found in the cytoplasm. It carries out the reaction D-glyceraldehyde 3-phosphate = dihydroxyacetone phosphate. Its pathway is carbohydrate biosynthesis; gluconeogenesis. The protein operates within carbohydrate degradation; glycolysis; D-glyceraldehyde 3-phosphate from glycerone phosphate: step 1/1. In terms of biological role, involved in the gluconeogenesis. Catalyzes stereospecifically the conversion of dihydroxyacetone phosphate (DHAP) to D-glyceraldehyde-3-phosphate (G3P). The chain is Triosephosphate isomerase from Streptococcus pyogenes serotype M5 (strain Manfredo).